Consider the following 75-residue polypeptide: UPF0235 protein Mvan_2846 (75 aa).

It belongs to the UPF0235 family.

The chain is UPF0235 protein Mvan_2846 from Mycolicibacterium vanbaalenii (strain DSM 7251 / JCM 13017 / BCRC 16820 / KCTC 9966 / NRRL B-24157 / PYR-1) (Mycobacterium vanbaalenii).